A 390-amino-acid chain; its full sequence is 1-deoxy-D-xylulose 5-phosphate reductoisomerase (390 aa).

NADPH is bound by residues T10, G11, S12, I13, A36, K37, N38, and N122. K123 provides a ligand contact to 1-deoxy-D-xylulose 5-phosphate. E124 contacts NADPH. D148 lines the Mn(2+) pocket. Positions 149, 150, 174, and 197 each coordinate 1-deoxy-D-xylulose 5-phosphate. E150 serves as a coordination point for Mn(2+). Position 203 (G203) interacts with NADPH. Residues S210, N215, K216, and E219 each coordinate 1-deoxy-D-xylulose 5-phosphate. E219 is a binding site for Mn(2+).

It belongs to the DXR family. Mg(2+) is required as a cofactor. It depends on Mn(2+) as a cofactor.

The enzyme catalyses 2-C-methyl-D-erythritol 4-phosphate + NADP(+) = 1-deoxy-D-xylulose 5-phosphate + NADPH + H(+). It participates in isoprenoid biosynthesis; isopentenyl diphosphate biosynthesis via DXP pathway; isopentenyl diphosphate from 1-deoxy-D-xylulose 5-phosphate: step 1/6. Functionally, catalyzes the NADPH-dependent rearrangement and reduction of 1-deoxy-D-xylulose-5-phosphate (DXP) to 2-C-methyl-D-erythritol 4-phosphate (MEP). The polypeptide is 1-deoxy-D-xylulose 5-phosphate reductoisomerase (Trichlorobacter lovleyi (strain ATCC BAA-1151 / DSM 17278 / SZ) (Geobacter lovleyi)).